The sequence spans 176 residues: Cathelicidin-2 (176 aa).

Positions 1–29 (METQGASLSLGRWSLWLLLLGLVLPSASA) are cleaved as a signal peptide. Q30 carries the pyrrolidone carboxylic acid modification. Positions 30–130 (QALSYREAVL…DINCNELQSV (101 aa)) are excised as a propeptide. 2 disulfide bridges follow: C85-C96 and C107-C124. Residues 135–176 (PIRRPPIRPPFRPPFRPPVRPPIRPPFRPPFRPPIGPFPGRR) form a disordered region. Over residues 141–176 (IRPPFRPPFRPPVRPPIRPPFRPPFRPPIGPFPGRR) the composition is skewed to pro residues. At P173 the chain carries Proline amide. The propeptide at 174–176 (GRR) is removed in mature form.

This sequence belongs to the cathelicidin family. Elastase is responsible for its maturation.

It is found in the secreted. Functionally, binds to the lipid A moiety of bacterial lipipolysaccharides (LPS), a glycolipid present in the outer membrane of all Gram-negative bacteria. Potent antimicrobial activity. This is Cathelicidin-2 (CATHL2) from Ovis aries (Sheep).